Here is a 156-residue protein sequence, read N- to C-terminus: 6,7-dimethyl-8-ribityllumazine synthase (156 aa).

5-amino-6-(D-ribitylamino)uracil contacts are provided by residues phenylalanine 23, 57 to 59 (AFE), and 81 to 83 (AVI). 86–87 (ST) is a binding site for (2S)-2-hydroxy-3-oxobutyl phosphate. Histidine 89 serves as the catalytic Proton donor. Position 114 (phenylalanine 114) interacts with 5-amino-6-(D-ribitylamino)uracil. Arginine 128 contributes to the (2S)-2-hydroxy-3-oxobutyl phosphate binding site.

This sequence belongs to the DMRL synthase family.

The enzyme catalyses (2S)-2-hydroxy-3-oxobutyl phosphate + 5-amino-6-(D-ribitylamino)uracil = 6,7-dimethyl-8-(1-D-ribityl)lumazine + phosphate + 2 H2O + H(+). It functions in the pathway cofactor biosynthesis; riboflavin biosynthesis; riboflavin from 2-hydroxy-3-oxobutyl phosphate and 5-amino-6-(D-ribitylamino)uracil: step 1/2. Functionally, catalyzes the formation of 6,7-dimethyl-8-ribityllumazine by condensation of 5-amino-6-(D-ribitylamino)uracil with 3,4-dihydroxy-2-butanone 4-phosphate. This is the penultimate step in the biosynthesis of riboflavin. This is 6,7-dimethyl-8-ribityllumazine synthase from Campylobacter curvus (strain 525.92).